The primary structure comprises 409 residues: Microfibrillar-associated protein 3-like (409 aa).

A signal peptide spans 1 to 28; it reads MGLQKSHLTVCLPPSVPFLILVSTLATA. At 29-148 the chain is on the extracellular side; it reads KSVTNSTLNG…TLRVIFTSGD (120 aa). N-linked (GlcNAc...) asparagine glycosylation is found at N33, N37, N67, N111, and N135. The Ig-like C2-type domain maps to 47 to 141; sequence PVIIARTDHI…GTINNTVTLR (95 aa). A disulfide bridge connects residues C68 and C125. A helical transmembrane segment spans residues 149-169; sequence MGVYYMVVCLVAFTIVMILNI. Residues 170-409 lie on the Cytoplasmic side of the membrane; the sequence is TRLCMMSSHL…NTCIIYESHV (240 aa). Position 287 is a phosphotyrosine (Y287). Residues S298, S303, S306, and S307 each carry the phosphoserine modification. Residues 319 to 395 form a disordered region; that stretch reads VSVHPQSKRD…AHLETTEPAV (77 aa). The span at 325-340 shows a compositional bias: basic and acidic residues; sequence SKRDHVDDQEGGHFEV. The segment covering 356 to 373 has biased composition (low complexity); sequence TAEPSTDITTTELTSEET.

The protein resides in the cell membrane. Its subcellular location is the nucleus. The protein localises to the cytoplasm. Functionally, may participate in the nuclear signaling of EGFR and MAPK1/ERK2. In Mus musculus (Mouse), this protein is Microfibrillar-associated protein 3-like (Mfap3l).